Consider the following 1036-residue polypeptide: KAT8 regulatory NSL complex subunit 1 (1036 aa).

Residue Lys104 is modified to N6-acetyllysine. Disordered regions lie at residues 145 to 211 (GQTA…CTLP) and 226 to 257 (NSTA…SSSN). Over residues 226-244 (NSTANKSSVNSMDQPALQG) the composition is skewed to polar residues. The segment covering 245–256 (SSRLSPSTDSSS) has biased composition (low complexity). Ser249 bears the Phosphoserine mark. A Glycyl lysine isopeptide (Lys-Gly) (interchain with G-Cter in SUMO2) cross-link involves residue Lys262. Phosphoserine is present on Ser268. The stretch at 285–312 (TALLRRQADIEIRARRLQKRLQVVQAKQ) forms a coiled coil. Lys331 is covalently cross-linked (Glycyl lysine isopeptide (Lys-Gly) (interchain with G-Cter in SUMO2)). 2 disordered regions span residues 399-423 (DSDV…RADP) and 739-787 (SPSY…RRRG). The segment covering 759–772 (STSSDTSTPTSSGS) has biased composition (low complexity). A required for activation of KAT8 histone acetyltransferase activity region spans residues 781–813 (PVRRRRGESSFDINNIVIPMSVAATTRVEKLQY). The PEHE domain maps to 815–966 (EILTPSWREV…GLDEQSVQPW (152 aa)). The interaction with KAT8 HAT domain stretch occupies residues 841 to 859 (EDLSDAAFAALHAKCEEME). The disordered stretch occupies residues 869-931 (VPPQRRGSRS…SPISPELHSA (63 aa)). Residues 886 to 896 (TTPQLGSANPS) show a composition bias toward polar residues. Residues 906–919 (SSSHSLSEFSHGQS) show a composition bias toward low complexity. Phosphoserine is present on residues Ser922 and Ser925. Thr934 is modified (phosphothreonine). At Ser976 the chain carries Phosphoserine. The interval 989 to 1020 (DTAARCTRRTSGSKTGREAEVAPTSPPVVPLK) is disordered.

Component of the NSL complex at least composed of MOF/KAT8, KANSL1, KANSL2, KANSL3, MCRS1, PHF20, OGT1/OGT, WDR5 and HCFC1. Interacts (via PEHE domain) with KAT8 (via HAT domain); the interaction is direct. Component of some MLL1/MLL complex, at least composed of the core components KMT2A/MLL1, ASH2L, HCFC1, WDR5 and RBBP5, as well as the facultative components BACC1, CHD8, E2F6, HSP70, INO80C, KANSL1, LAS1L, MAX, MCRS1, MGA, KAT8/MOF, PELP1, PHF20, PRP31, RING2, RUVB1/TIP49A, RUVB2/TIP49B, SENP3, TAF1, TAF4, TAF6, TAF7, TAF9 and TEX10.

Its subcellular location is the nucleus. The protein localises to the chromosome. It localises to the centromere. It is found in the kinetochore. The protein resides in the mitochondrion. Its subcellular location is the cytoplasm. The protein localises to the cytoskeleton. It localises to the spindle pole. Its function is as follows. Non-catalytic component of the NSL histone acetyltransferase complex, a multiprotein complex that mediates histone H4 acetylation at 'Lys-5'- and 'Lys-8' (H4K5ac and H4K8ac) at transcription start sites and promotes transcription initiation. The NSL complex also acts as a regulator of gene expression in mitochondria. In addition to its role in transcription, KANSL1 also plays an essential role in spindle assembly during mitosis. Associates with microtubule ends and contributes to microtubule stability. The chain is KAT8 regulatory NSL complex subunit 1 (Kansl1) from Mus musculus (Mouse).